A 240-amino-acid chain; its full sequence is 1-(5-phosphoribosyl)-5-[(5-phosphoribosylamino)methylideneamino] imidazole-4-carboxamide isomerase (240 aa).

The active-site Proton acceptor is aspartate 8. The active-site Proton donor is the aspartate 129.

This sequence belongs to the HisA/HisF family.

Its subcellular location is the cytoplasm. It catalyses the reaction 1-(5-phospho-beta-D-ribosyl)-5-[(5-phospho-beta-D-ribosylamino)methylideneamino]imidazole-4-carboxamide = 5-[(5-phospho-1-deoxy-D-ribulos-1-ylimino)methylamino]-1-(5-phospho-beta-D-ribosyl)imidazole-4-carboxamide. The protein operates within amino-acid biosynthesis; L-histidine biosynthesis; L-histidine from 5-phospho-alpha-D-ribose 1-diphosphate: step 4/9. This is 1-(5-phosphoribosyl)-5-[(5-phosphoribosylamino)methylideneamino] imidazole-4-carboxamide isomerase from Caldanaerobacter subterraneus subsp. tengcongensis (strain DSM 15242 / JCM 11007 / NBRC 100824 / MB4) (Thermoanaerobacter tengcongensis).